A 64-amino-acid polypeptide reads, in one-letter code: Large ribosomal subunit protein bL35 (64 aa).

This sequence belongs to the bacterial ribosomal protein bL35 family.

The chain is Large ribosomal subunit protein bL35 from Ureaplasma urealyticum serovar 10 (strain ATCC 33699 / Western).